We begin with the raw amino-acid sequence, 298 residues long: Probable 2-(5''-triphosphoribosyl)-3'-dephosphocoenzyme-A synthase 2 (298 aa).

The protein belongs to the CitG/MdcB family.

The catalysed reaction is 3'-dephospho-CoA + ATP = 2'-(5''-triphospho-alpha-D-ribosyl)-3'-dephospho-CoA + adenine. The polypeptide is Probable 2-(5''-triphosphoribosyl)-3'-dephosphocoenzyme-A synthase 2 (Salmonella paratyphi A (strain ATCC 9150 / SARB42)).